The chain runs to 633 residues: Chaperone protein HtpG (633 aa).

An a; substrate-binding region spans residues 1-341; that stretch reads MTAPHETMSF…SADLPLNVSR (341 aa). A b region spans residues 342-562; that stretch reads ELLQESRDVK…DGDMSGYLQR (221 aa). The c stretch occupies residues 563-633; sequence LLKQAGQKAP…YVQRVNRLLA (71 aa).

The protein belongs to the heat shock protein 90 family. In terms of assembly, homodimer.

It is found in the cytoplasm. Functionally, molecular chaperone. Has ATPase activity. The protein is Chaperone protein HtpG of Cupriavidus metallidurans (strain ATCC 43123 / DSM 2839 / NBRC 102507 / CH34) (Ralstonia metallidurans).